Consider the following 130-residue polypeptide: Small ribosomal subunit protein uS8 (130 aa).

Belongs to the universal ribosomal protein uS8 family. As to quaternary structure, part of the 30S ribosomal subunit. Contacts proteins S5 and S12.

One of the primary rRNA binding proteins, it binds directly to 16S rRNA central domain where it helps coordinate assembly of the platform of the 30S subunit. The chain is Small ribosomal subunit protein uS8 from Ruegeria sp. (strain TM1040) (Silicibacter sp.).